Consider the following 267-residue polypeptide: 2-keto-3-deoxy-L-rhamnonate aldolase (267 aa).

His-49 (proton acceptor) is an active-site residue. Position 151 (Gln-151) interacts with substrate. Glu-153 is a binding site for Mg(2+). 2 residues coordinate substrate: Ala-178 and Asp-179. Mg(2+) is bound at residue Asp-179.

The protein belongs to the HpcH/HpaI aldolase family. KDR aldolase subfamily. Homohexamer. It depends on Mg(2+) as a cofactor.

The catalysed reaction is 2-dehydro-3-deoxy-L-rhamnonate = (S)-lactaldehyde + pyruvate. Its function is as follows. Catalyzes the reversible retro-aldol cleavage of 2-keto-3-deoxy-L-rhamnonate (KDR) to pyruvate and lactaldehyde. This is 2-keto-3-deoxy-L-rhamnonate aldolase from Escherichia coli O17:K52:H18 (strain UMN026 / ExPEC).